The primary structure comprises 130 residues: Small ribosomal subunit protein uS9 (130 aa).

The disordered stretch occupies residues 109-130 (RVKERKKYGQKGARAKFQFSKR).

This sequence belongs to the universal ribosomal protein uS9 family.

The chain is Small ribosomal subunit protein uS9 from Desulfotalea psychrophila (strain LSv54 / DSM 12343).